Here is a 189-residue protein sequence, read N- to C-terminus: MASSAAEGKLTVITGPSGVGKGSLVKQLLELHPEIWLSISATTREARQGEIEGDHYFFLNRDRFAELVQAGGCLEWAEFAGNRYGTPRQPVEQQLSLGRPVLLEIELEGARQVRRSFPEAFQIFLAPPSFEELERRIRGRATDPEEAIQRRLARAREELMAQQEFDAVVINDNLQVAVIELESLMGLSC.

The Guanylate kinase-like domain maps to 8-186 (GKLTVITGPS…AVIELESLMG (179 aa)). 15 to 22 (GPSGVGKG) lines the ATP pocket.

The protein belongs to the guanylate kinase family.

Its subcellular location is the cytoplasm. It carries out the reaction GMP + ATP = GDP + ADP. Essential for recycling GMP and indirectly, cGMP. The polypeptide is Guanylate kinase (Prochlorococcus marinus (strain MIT 9313)).